The chain runs to 416 residues: MEAKPLASSSSEPNMISPSSNIKPKLKDEDYMELVCENGQILAKIRRPKNNGSFQKQRRQSLLDLYETEYSEGFKKNIKILGDTQVVPVSQSKPQQDKETNEQMNNNKKKLKSSKIEFERNVSKSNKCVESSTLIDVSAKGPKNVEVTTAPPDEQSAAVGRSTELYFASSSKFSRGTSRDLSCCSLKRKYGDIEEEESTYLSNNSDDESDDAKTQVHARTRKPVTKRKRSTEVHKLYERKRRDEFNKKMRALQDLLPNCYKDDKASLLDEAIKYMRTLQLQVQMMSMGNGLIRPPTMLPMGHYSPMGLGMHMGAAATPTSIPQFLPMNVQATGFPGMNNAPPQMLSFLNHPSGLIPNTPIFSPLENCSQPFVVPSCVSQTQATSFTQFPKSASASNLEDAMQYRGSNGFSYYRSPN.

Disordered stretches follow at residues 1–24 (MEAKPLASSSSEPNMISPSSNIKP), 89–113 (VSQSKPQQDKETNEQMNNNKKKLKS), and 197–231 (ESTYLSNNSDDESDDAKTQVHARTRKPVTKRKRST). Low complexity predominate over residues 8-22 (SSSSEPNMISPSSNI). Residues 95–124 (QQDKETNEQMNNNKKKLKSSKIEFERNVSK) adopt a coiled-coil conformation. Residues 216 to 229 (VHARTRKPVTKRKR) are compositionally biased toward basic residues. In terms of domain architecture, bHLH spans 229–278 (RSTEVHKLYERKRRDEFNKKMRALQDLLPNCYKDDKASLLDEAIKYMRTL).

Homodimer. Interacts with APRR1/TOC1. Associates to PTAC12/HMR/PAP5 which acts as a transcriptional coactivator. As to expression, mainly expressed in stems, fruits and flowers and, to a lower extent, in leaves, seedlings and roots. Accumulates in etiolated seedlings.

The protein resides in the nucleus. Transcription factor. Involved in responses to transient and long-term shade. Required for the light-mediated inhibition of hypocotyl elongation. Necessary for rapid light-induced expression of the photomorphogenesis- and circadian-related gene APRR9. Seems to play a role in multiple PHYB responses, such as flowering transition and petiole elongation. The sequence is that of Transcription factor PIL1 from Arabidopsis thaliana (Mouse-ear cress).